Consider the following 410-residue polypeptide: F-box protein At5g36730 (410 aa).

The region spanning 1 to 46 (MAMSNLPRDLLEEVLSRVPVKSIAAVRSTCKNWNSLTYGQSFTKKL) is the F-box domain.

This Arabidopsis thaliana (Mouse-ear cress) protein is F-box protein At5g36730.